We begin with the raw amino-acid sequence, 132 residues long: Small ribosomal subunit protein uS8 (132 aa).

The protein belongs to the universal ribosomal protein uS8 family. In terms of assembly, part of the 30S ribosomal subunit. Contacts proteins S5 and S12.

Its function is as follows. One of the primary rRNA binding proteins, it binds directly to 16S rRNA central domain where it helps coordinate assembly of the platform of the 30S subunit. In Streptococcus pneumoniae serotype 19F (strain G54), this protein is Small ribosomal subunit protein uS8.